Reading from the N-terminus, the 317-residue chain is Ribosomal protein L11 methyltransferase (317 aa).

Residues Thr158, Gly179, Asp201, and Asn244 each contribute to the S-adenosyl-L-methionine site.

It belongs to the methyltransferase superfamily. PrmA family.

It localises to the cytoplasm. It carries out the reaction L-lysyl-[protein] + 3 S-adenosyl-L-methionine = N(6),N(6),N(6)-trimethyl-L-lysyl-[protein] + 3 S-adenosyl-L-homocysteine + 3 H(+). Its function is as follows. Methylates ribosomal protein L11. The sequence is that of Ribosomal protein L11 methyltransferase from Streptococcus mutans serotype c (strain ATCC 700610 / UA159).